Reading from the N-terminus, the 338-residue chain is Anthranilate phosphoribosyltransferase (338 aa).

Residues G83, 86–87, S91, 93–96, 111–119, and A123 each bind 5-phospho-alpha-D-ribose 1-diphosphate; these read GD, NCST, and KHGNRAVSS. An anthranilate-binding site is contributed by G83. S95 contacts Mg(2+). Anthranilate is bound at residue N114. R169 lines the anthranilate pocket. Mg(2+)-binding residues include D228 and E229.

Belongs to the anthranilate phosphoribosyltransferase family. As to quaternary structure, homodimer. It depends on Mg(2+) as a cofactor.

It carries out the reaction N-(5-phospho-beta-D-ribosyl)anthranilate + diphosphate = 5-phospho-alpha-D-ribose 1-diphosphate + anthranilate. Its pathway is amino-acid biosynthesis; L-tryptophan biosynthesis; L-tryptophan from chorismate: step 2/5. In terms of biological role, catalyzes the transfer of the phosphoribosyl group of 5-phosphorylribose-1-pyrophosphate (PRPP) to anthranilate to yield N-(5'-phosphoribosyl)-anthranilate (PRA). This is Anthranilate phosphoribosyltransferase from Nitratidesulfovibrio vulgaris (strain DSM 19637 / Miyazaki F) (Desulfovibrio vulgaris).